An 82-amino-acid polypeptide reads, in one-letter code: UPF0512 protein P (82 aa).

Belongs to the UPF0512 family.

The chain is UPF0512 protein P from Dictyostelium discoideum (Social amoeba).